The following is a 217-amino-acid chain: NADPH-dependent 3-demethoxyubiquinone 3-hydroxylase, mitochondrial (217 aa).

A run of 2 repeats spans residues 48 to 129 and 130 to 217. The 2 X approximate tandem repeats stretch occupies residues 48–217; it reads AVDQIIRVDH…SAAIYLSERF (170 aa). The Fe cation site is built by Glu60, Glu90, His93, Glu142, Glu178, and His181. NADH-binding residues include Tyr212 and Arg216.

It belongs to the COQ7 family. In terms of assembly, component of a multi-subunit COQ enzyme complex. Interacts with COQ8B and COQ6. Interacts with COQ9. Fe cation is required as a cofactor.

Its subcellular location is the mitochondrion inner membrane. The enzyme catalyses a 5-methoxy-2-methyl-3-(all-trans-polyprenyl)benzoquinone + NADH + O2 = a 3-demethylubiquinone + NAD(+) + H2O. Its pathway is cofactor biosynthesis; ubiquinone biosynthesis. Functionally, catalyzes the hydroxylation of the 5-methoxy-2-methyl-3-(all-trans-polyprenyl)benzoquinone at the C6 position and participates in the biosynthesis of ubiquinone. Catalyzes the reaction through a substrate-mediated reduction pathway, whereby NADH shuttles electrons to 5-methoxy-2-methyl-3-(all-trans-decaprenyl)benzoquinone, which then transfers the electrons to the two Fe(3+) centers. The binding of 5-methoxy-2-methyl-3-(all-trans-polyprenyl)benzoquinone (DMQn) mediates reduction of the diiron center by nicotinamide adenine dinucleotide (NADH) and initiates oxygen activation for subsequent DMQ hydroxylation. The physiological substrates are 5-methoxy-2-methyl-3-(all-trans-nonaprenyl)benzoquinone (DMQ(9)) and 5-methoxy-2-methyl-3-(all-trans-decaprenyl)benzoquinone (DMQ(10)), however in vitro the enzyme does not have any specificity concerning the length of the polyprenyl tail, and accepts tails of various lengths with similar efficiency. Also has a structural role in the COQ enzyme complex, stabilizing other COQ polypeptides. Involved in lifespan determination in a ubiquinone-independent manner. Plays a role in modulating mitochondrial stress responses, acting in the nucleus, perhaps via regulating gene expression, independent of its characterized mitochondrial function in ubiquinone biosynthesis. This is NADPH-dependent 3-demethoxyubiquinone 3-hydroxylase, mitochondrial from Rattus norvegicus (Rat).